A 177-amino-acid polypeptide reads, in one-letter code: MSIDNIKSALPEYAKDLKLNLGSIANTTELTEQQLWGALVATAAATKNARLLREISEDALDILSEEAYNAALGAAAIMGMNNVFYRTKGQLDGKYDDLRAGLRMNIIGNPGVAKEDFELWSLAVSAINGCGHCLAAHEKTLRDADVARTTIFEAIRLASIVSGVAQALLTADTLAAV.

The active-site Proton donor is the Cys130. Residues Cys130 and Cys133 are joined by a disulfide bond. The active-site Cysteine sulfenic acid (-SOH) intermediate is Cys133.

The protein belongs to the AhpD family. As to quaternary structure, homotrimer.

It carries out the reaction N(6)-[(R)-dihydrolipoyl]-L-lysyl-[lipoyl-carrier protein] + a hydroperoxide = N(6)-[(R)-lipoyl]-L-lysyl-[lipoyl-carrier protein] + an alcohol + H2O. Functionally, antioxidant protein with alkyl hydroperoxidase activity. Required for the reduction of the AhpC active site cysteine residues and for the regeneration of the AhpC enzyme activity. The protein is Alkyl hydroperoxide reductase AhpD of Mycolicibacterium smegmatis (strain ATCC 700084 / mc(2)155) (Mycobacterium smegmatis).